The following is a 510-amino-acid chain: MWYRTFRTLGYTICRPYATCATKAERFVKTIDPSTLPRGYLVSSTYAGIKNAIRPVTSTNEPSAATTNVPHPQEAPKPDVALIVSSVPAAIAGTFTTNVFKAAPVVHATTALKAAGPNARVRAILTNSGCANAVTGQQGLEDTQTLVNRVQALLSPRNQNAIPTYEQDARSSSTDVLMMSTGVIGVRLPVAHIQRCLEHLAAPSILQSHPDAWLEAARAYMTTDTFPKIRTRQFILGNRRCSIVGIDKGAGMIHPRMTRSGGQLHATLLGVFATDAPISSATLQRCLDEAVRVSFNCISVDGDMSTNDTILALANGQAPFVDLDCTDTPNEWTETEHPDMVNKFAEELKSLCIEMSHLIVRDGEGAEKFVQVHVRNAGTYEQAHAIASSISTSALVKCAMHGEDANWGRILCSAGYASLPASTPAWTLDPSKVNVTFLPPPHQPDDLAPLPTLVNGVPQAVNETQAKKLLSYEDIYVDVDLQGGSWGSQGRSEATYWTCDFSKEYITVRW.

Polar residues predominate over residues 57-70 (TSTNEPSAATTNVP). The tract at residues 57–76 (TSTNEPSAATTNVPHPQEAP) is disordered. Residues T222, K248, T267, and E364 each coordinate substrate. T267 acts as the Nucleophile in catalysis.

Belongs to the ArgJ family. As to quaternary structure, heterodimer of an alpha and a beta chain. The alpha and beta chains are autoproteolytically processed from a single precursor protein within the mitochondrion.

The protein localises to the mitochondrion matrix. It catalyses the reaction N(2)-acetyl-L-ornithine + L-glutamate = N-acetyl-L-glutamate + L-ornithine. The catalysed reaction is L-glutamate + acetyl-CoA = N-acetyl-L-glutamate + CoA + H(+). Its pathway is amino-acid biosynthesis; L-arginine biosynthesis; L-ornithine and N-acetyl-L-glutamate from L-glutamate and N(2)-acetyl-L-ornithine (cyclic): step 1/1. The protein operates within amino-acid biosynthesis; L-arginine biosynthesis; N(2)-acetyl-L-ornithine from L-glutamate: step 1/4. Catalyzes two activities which are involved in the cyclic version of arginine biosynthesis: the synthesis of acetylglutamate from glutamate and acetyl-CoA, and of ornithine by transacetylation between acetylornithine and glutamate. The protein is Arginine biosynthesis bifunctional protein ArgJ, mitochondrial of Malassezia globosa (strain ATCC MYA-4612 / CBS 7966) (Dandruff-associated fungus).